The following is a 455-amino-acid chain: MSLDIVILAAGQGTRMRSALPKVLHPVAGNSMLGHVIHSARQLQPQGIHVVIGHGAELVRERLAADDLNFVMQDKQLGTGHAVAQALPALTADTVLVLYGDVPLIEVETLQRLLAKASDQQLGLLTVTLEDPTGYGRIVRDEQGQVTAIVEHKDANDAQKAIKEGNTGILALPAARLADWMGRLSNNNAQGEYYLTDVIAMAVADGLVVATEQPHDPMEVQGANDRRQLSELERHYQLREGRRLMAQGVTLRDPARFDVRGEVTVGRDVLIDINVILEGKVVIEDDVQIGPNCVIKNTTLRKGAVVKANSHLEGAVMGEGSDAGPFARLRPGSVLDAKAHVGNFVELKNAHLGEGAKVGHLTYLGDAEIGARTNIGAGTITCNYDGANKFKTVMGEDVFIGSNNSLVAPVEIKAGATTAAGSTITQTVEAGDLAVARARQRNISGWKRPEKTKKS.

Residues 1-226 (MSLDIVILAA…PMEVQGANDR (226 aa)) form a pyrophosphorylase region. UDP-N-acetyl-alpha-D-glucosamine-binding positions include 8-11 (LAAG), K22, Q73, 78-79 (GT), 99-101 (YGD), G136, E151, N166, and N224. D101 serves as a coordination point for Mg(2+). Mg(2+) is bound at residue N224. The interval 227 to 247 (RQLSELERHYQLREGRRLMAQ) is linker. The N-acetyltransferase stretch occupies residues 248–455 (GVTLRDPARF…WKRPEKTKKS (208 aa)). Residues R330 and K348 each coordinate UDP-N-acetyl-alpha-D-glucosamine. H360 functions as the Proton acceptor in the catalytic mechanism. Residues Y363 and N374 each coordinate UDP-N-acetyl-alpha-D-glucosamine. Acetyl-CoA contacts are provided by residues A377, 383–384 (NY), S402, A420, and R437.

In the N-terminal section; belongs to the N-acetylglucosamine-1-phosphate uridyltransferase family. The protein in the C-terminal section; belongs to the transferase hexapeptide repeat family. As to quaternary structure, homotrimer. It depends on Mg(2+) as a cofactor.

Its subcellular location is the cytoplasm. It carries out the reaction alpha-D-glucosamine 1-phosphate + acetyl-CoA = N-acetyl-alpha-D-glucosamine 1-phosphate + CoA + H(+). The catalysed reaction is N-acetyl-alpha-D-glucosamine 1-phosphate + UTP + H(+) = UDP-N-acetyl-alpha-D-glucosamine + diphosphate. The protein operates within nucleotide-sugar biosynthesis; UDP-N-acetyl-alpha-D-glucosamine biosynthesis; N-acetyl-alpha-D-glucosamine 1-phosphate from alpha-D-glucosamine 6-phosphate (route II): step 2/2. It participates in nucleotide-sugar biosynthesis; UDP-N-acetyl-alpha-D-glucosamine biosynthesis; UDP-N-acetyl-alpha-D-glucosamine from N-acetyl-alpha-D-glucosamine 1-phosphate: step 1/1. Its pathway is bacterial outer membrane biogenesis; LPS lipid A biosynthesis. In terms of biological role, catalyzes the last two sequential reactions in the de novo biosynthetic pathway for UDP-N-acetylglucosamine (UDP-GlcNAc). The C-terminal domain catalyzes the transfer of acetyl group from acetyl coenzyme A to glucosamine-1-phosphate (GlcN-1-P) to produce N-acetylglucosamine-1-phosphate (GlcNAc-1-P), which is converted into UDP-GlcNAc by the transfer of uridine 5-monophosphate (from uridine 5-triphosphate), a reaction catalyzed by the N-terminal domain. This is Bifunctional protein GlmU from Pseudomonas putida (strain GB-1).